Consider the following 114-residue polypeptide: MSVQTAVPIEFSDAAARKVKALVEEEENPNLKLRVYVTGGGCSGFQYGFTFDEKVNDGDTTIDKDQVTLVVDPMSLQYLLGGEVDYTEGLEGSRFLVNNPNATTTCGCGASFTV.

Iron-sulfur cluster contacts are provided by Cys-42, Cys-106, and Cys-108.

Belongs to the HesB/IscA family. As to quaternary structure, homodimer. Requires iron-sulfur cluster as cofactor.

In terms of biological role, required for insertion of 4Fe-4S clusters for at least IspG. This is Iron-sulfur cluster insertion protein ErpA from Pseudoalteromonas atlantica (strain T6c / ATCC BAA-1087).